The chain runs to 109 residues: Larval cuticle protein 1 (109 aa).

Positions methionine 1–alanine 14 are cleaved as a signal peptide. Positions glutamate 34–alanine 107 constitute a Chitin-binding type R&amp;R domain.

Its function is as follows. Component of the cuticle of the larva of Helicoverpa armigera. The polypeptide is Larval cuticle protein 1 (LCP1) (Helicoverpa armigera (Cotton bollworm)).